Consider the following 697-residue polypeptide: Elongation factor G (697 aa).

One can recognise a tr-type G domain in the interval 8–290 (ERYRNIGISA…AVLDFLPSPV (283 aa)). Residues 17–24 (AHIDAGKT), 88–92 (DTPGH), and 142–145 (NKMD) each bind GTP.

The protein belongs to the TRAFAC class translation factor GTPase superfamily. Classic translation factor GTPase family. EF-G/EF-2 subfamily.

Its subcellular location is the cytoplasm. Functionally, catalyzes the GTP-dependent ribosomal translocation step during translation elongation. During this step, the ribosome changes from the pre-translocational (PRE) to the post-translocational (POST) state as the newly formed A-site-bound peptidyl-tRNA and P-site-bound deacylated tRNA move to the P and E sites, respectively. Catalyzes the coordinated movement of the two tRNA molecules, the mRNA and conformational changes in the ribosome. The chain is Elongation factor G from Methylobacillus flagellatus (strain ATCC 51484 / DSM 6875 / VKM B-1610 / KT).